The chain runs to 131 residues: Leptin receptor overlapping transcript-like 1 (131 aa).

4 helical membrane-spanning segments follow: residues 7 to 27, 32 to 52, 69 to 89, and 100 to 120; these read LISL…GCAL, QYWP…YCIA, LAIF…IVFA, and ALVL…FLVF.

Belongs to the OB-RGRP/VPS55 family.

Its subcellular location is the membrane. Negatively regulates growth hormone (GH) receptor cell surface expression in liver. May play a role in liver resistance to GH during periods of reduced nutrient availability. The chain is Leptin receptor overlapping transcript-like 1 (LEPROTL1) from Bos taurus (Bovine).